The primary structure comprises 304 residues: tRNA pseudouridine synthase B (304 aa).

D44 (nucleophile) is an active-site residue.

The protein belongs to the pseudouridine synthase TruB family. Type 1 subfamily.

The enzyme catalyses uridine(55) in tRNA = pseudouridine(55) in tRNA. Functionally, responsible for synthesis of pseudouridine from uracil-55 in the psi GC loop of transfer RNAs. This is tRNA pseudouridine synthase B from Novosphingobium aromaticivorans (strain ATCC 700278 / DSM 12444 / CCUG 56034 / CIP 105152 / NBRC 16084 / F199).